A 251-amino-acid chain; its full sequence is Vacuolar protein sorting-associated protein 37D (251 aa).

A VPS37 C-terminal domain is found at 93-182; sequence AENCADKLQR…RRRERSAQPA (90 aa). The interval 174–251 is disordered; that stretch reads RRERSAQPAP…RPSQPEPPHR (78 aa). Pro residues predominate over residues 221–251; it reads PVPPLKGSPGCPLGPAPLLSPRPSQPEPPHR.

This sequence belongs to the VPS37 family. As to quaternary structure, component of the ESCRT-I complex (endosomal sorting complex required for transport I) which consists of TSG101, VPS28, a VPS37 protein (VPS37A to -D) and MVB12A or MVB12B in a 1:1:1:1 stoichiometry. Interacts with TSG101 and MVB12A. Component of the ESCRT-I complex (endosomal sorting complex required for transport I) which consists of TSG101, VPS28, a VPS37 protein (VPS37A to -D) and UBAP1 in a 1:1:1:1 stoichiometry.

It is found in the late endosome membrane. Its function is as follows. Component of the ESCRT-I complex, a regulator of vesicular trafficking process. Required for the sorting of endocytic ubiquitinated cargos into multivesicular bodies. May be involved in cell growth and differentiation. The sequence is that of Vacuolar protein sorting-associated protein 37D from Homo sapiens (Human).